We begin with the raw amino-acid sequence, 154 residues long: UPF0178 protein RC1_2062 (154 aa).

This sequence belongs to the UPF0178 family.

This chain is UPF0178 protein RC1_2062, found in Rhodospirillum centenum (strain ATCC 51521 / SW).